Here is a 369-residue protein sequence, read N- to C-terminus: Phospho-N-acetylmuramoyl-pentapeptide-transferase (369 aa).

A run of 10 helical transmembrane segments spans residues 2-22 (IALL…TPLF), 55-75 (TVVV…MFLM), 86-106 (ALIL…DDFI), 120-140 (AKLI…LNFP), 163-183 (LAFG…NLIV), 196-216 (LDGL…LMGI), 239-259 (PLDL…FLWW), 266-286 (IFMG…FAIL), 291-311 (LLLG…IIQV), and 348-368 (ILGG…WVVL).

Belongs to the glycosyltransferase 4 family. MraY subfamily. Mg(2+) serves as cofactor.

It localises to the cell membrane. It carries out the reaction UDP-N-acetyl-alpha-D-muramoyl-L-alanyl-gamma-D-glutamyl-meso-2,6-diaminopimeloyl-D-alanyl-D-alanine + di-trans,octa-cis-undecaprenyl phosphate = di-trans,octa-cis-undecaprenyl diphospho-N-acetyl-alpha-D-muramoyl-L-alanyl-D-glutamyl-meso-2,6-diaminopimeloyl-D-alanyl-D-alanine + UMP. It participates in cell wall biogenesis; peptidoglycan biosynthesis. Its function is as follows. Catalyzes the initial step of the lipid cycle reactions in the biosynthesis of the cell wall peptidoglycan: transfers peptidoglycan precursor phospho-MurNAc-pentapeptide from UDP-MurNAc-pentapeptide onto the lipid carrier undecaprenyl phosphate, yielding undecaprenyl-pyrophosphoryl-MurNAc-pentapeptide, known as lipid I. The chain is Phospho-N-acetylmuramoyl-pentapeptide-transferase from Pseudarthrobacter chlorophenolicus (strain ATCC 700700 / DSM 12829 / CIP 107037 / JCM 12360 / KCTC 9906 / NCIMB 13794 / A6) (Arthrobacter chlorophenolicus).